The primary structure comprises 338 residues: RNA 3'-terminal phosphate cyclase (338 aa).

ATP-binding positions include Gln103 and 283-287 (YLADQ). His308 (tele-AMP-histidine intermediate) is an active-site residue.

Belongs to the RNA 3'-terminal cyclase family. Type 1 subfamily.

Its subcellular location is the cytoplasm. It carries out the reaction a 3'-end 3'-phospho-ribonucleotide-RNA + ATP = a 3'-end 2',3'-cyclophospho-ribonucleotide-RNA + AMP + diphosphate. Catalyzes the conversion of 3'-phosphate to a 2',3'-cyclic phosphodiester at the end of RNA. The mechanism of action of the enzyme occurs in 3 steps: (A) adenylation of the enzyme by ATP; (B) transfer of adenylate to an RNA-N3'P to produce RNA-N3'PP5'A; (C) and attack of the adjacent 2'-hydroxyl on the 3'-phosphorus in the diester linkage to produce the cyclic end product. The biological role of this enzyme is unknown but it is likely to function in some aspects of cellular RNA processing. This is RNA 3'-terminal phosphate cyclase from Escherichia coli O7:K1 (strain IAI39 / ExPEC).